The sequence spans 466 residues: 23S rRNA (uracil(1939)-C(5))-methyltransferase RlmD (466 aa).

Residues 1-54 enclose the TRAM domain; it reads MVDVLNIESLDLEARGIAHRDGKVLFVEGALPGERVTVQTVRRKPSYEIAKVEE. Residues Cys-67, Cys-73, Cys-76, and Cys-155 each contribute to the [4Fe-4S] cluster site. Gln-264, Phe-293, Asn-298, Glu-314, Asn-342, and Asp-363 together coordinate S-adenosyl-L-methionine. The active-site Nucleophile is Cys-393.

It belongs to the class I-like SAM-binding methyltransferase superfamily. RNA M5U methyltransferase family. RlmD subfamily.

It catalyses the reaction uridine(1939) in 23S rRNA + S-adenosyl-L-methionine = 5-methyluridine(1939) in 23S rRNA + S-adenosyl-L-homocysteine + H(+). Its function is as follows. Catalyzes the formation of 5-methyl-uridine at position 1939 (m5U1939) in 23S rRNA. In Bordetella parapertussis (strain 12822 / ATCC BAA-587 / NCTC 13253), this protein is 23S rRNA (uracil(1939)-C(5))-methyltransferase RlmD.